The primary structure comprises 131 residues: L-aspartate semialdehyde sulfurtransferase iron-sulfur subunit (131 aa).

4Fe-4S ferredoxin-type domains follow at residues 73 to 102 and 103 to 131; these read KVIK…MDED and YNVV…EIFE. Residues Cys-82, Cys-85, Cys-88, Cys-92, Cys-112, Cys-115, Cys-118, and Cys-122 each coordinate [4Fe-4S] cluster.

As to quaternary structure, may form a complex with MJ0100. [4Fe-4S] cluster is required as a cofactor.

Its pathway is amino-acid biosynthesis. Required for O-acetylhomoserine sulfhydrylase (OAHS)-independent homocysteine (Hcy) biosynthesis. Together with MJ0100, catalyzes the condensation of sulfide with aspartate semialdehyde to generate homocysteine. May be involved in the reduction of the disulfide formed in MJ0100. The chain is L-aspartate semialdehyde sulfurtransferase iron-sulfur subunit from Methanocaldococcus jannaschii (strain ATCC 43067 / DSM 2661 / JAL-1 / JCM 10045 / NBRC 100440) (Methanococcus jannaschii).